A 282-amino-acid chain; its full sequence is Release factor glutamine methyltransferase (282 aa).

Positions 141, 169, and 186 each coordinate S-adenosyl-L-methionine. 186 to 189 (NPPY) serves as a coordination point for substrate.

Belongs to the protein N5-glutamine methyltransferase family. PrmC subfamily.

It carries out the reaction L-glutaminyl-[peptide chain release factor] + S-adenosyl-L-methionine = N(5)-methyl-L-glutaminyl-[peptide chain release factor] + S-adenosyl-L-homocysteine + H(+). Methylates the class 1 translation termination release factors RF1/PrfA and RF2/PrfB on the glutamine residue of the universally conserved GGQ motif. The sequence is that of Release factor glutamine methyltransferase from Mycoplasma mycoides subsp. mycoides SC (strain CCUG 32753 / NCTC 10114 / PG1).